The following is a 195-amino-acid chain: Small ribosomal subunit protein uS4c (195 aa).

Positions M82 to N143 constitute an S4 RNA-binding domain.

Belongs to the universal ribosomal protein uS4 family. In terms of assembly, part of the 30S ribosomal subunit. Contacts protein S5. The interaction surface between S4 and S5 is involved in control of translational fidelity.

It is found in the plastid. Its subcellular location is the chloroplast. Its function is as follows. One of the primary rRNA binding proteins, it binds directly to 16S rRNA where it nucleates assembly of the body of the 30S subunit. With S5 and S12 plays an important role in translational accuracy. The sequence is that of Small ribosomal subunit protein uS4c (rps4) from Gladiolus murielae (Abyssinian gladiolus).